The primary structure comprises 271 residues: ATP synthase subunit delta (271 aa).

This sequence belongs to the ATPase delta chain family. F-type ATPases have 2 components, F(1) - the catalytic core - and F(0) - the membrane proton channel. F(1) has five subunits: alpha(3), beta(3), gamma(1), delta(1), epsilon(1). F(0) has three main subunits: a(1), b(2) and c(10-14). The alpha and beta chains form an alternating ring which encloses part of the gamma chain. F(1) is attached to F(0) by a central stalk formed by the gamma and epsilon chains, while a peripheral stalk is formed by the delta and b chains.

It localises to the cell membrane. Its function is as follows. F(1)F(0) ATP synthase produces ATP from ADP in the presence of a proton or sodium gradient. F-type ATPases consist of two structural domains, F(1) containing the extramembraneous catalytic core and F(0) containing the membrane proton channel, linked together by a central stalk and a peripheral stalk. During catalysis, ATP synthesis in the catalytic domain of F(1) is coupled via a rotary mechanism of the central stalk subunits to proton translocation. In terms of biological role, this protein is part of the stalk that links CF(0) to CF(1). It either transmits conformational changes from CF(0) to CF(1) or is implicated in proton conduction. The chain is ATP synthase subunit delta from Streptomyces griseus subsp. griseus (strain JCM 4626 / CBS 651.72 / NBRC 13350 / KCC S-0626 / ISP 5235).